The primary structure comprises 497 residues: MVSLLHKFLENASGKKGQSLASTAYLAALDHLLNAFPSIGERIIDELKSQRSHLKMIASENYSSLSVQLAMGNLLTDKYCEGSPFKRFYSCCENVDAIEWECVETAKELFAADCACVQPHSGADANLLAVMAILTHKVQGPAVSKLGYKTVNELTEEEYTLLKAEMSSCVCLGPSLNSGGHLTHGNVRLNVMSKLMRCFPYDVNPDTECFDYAEISRLAKEYKPKVLIAGYSSYSRRLNFAVLKQIAEDCGSVLWVDMAHFAGLVAGGVFVDEENPIPYADIVTTTTHKTLRGPRGGLVLATREYESTLNKACPLMMGGPLPHVIAAKTVALKEALSVDFKKYAHQVVNNARRLAERFLSHGLRLLTGGTDNHMMVIDLGSLGISGKIAEDILSSVGIAVNRNSLPSDAIGKWDTSGIRLGTPALTTLGMGIDEMEEVADIIVKVLRNIRLSCHVEGSSKKNKGELPEAIAQEARDRVRNLLLRFPLYPEIDLEALV.

(6S)-5,6,7,8-tetrahydrofolate is bound by residues Leu176 and 180–182 (GHL). Lys289 carries the N6-(pyridoxal phosphate)lysine modification. Glu306 is a binding site for (6S)-5,6,7,8-tetrahydrofolate.

The protein belongs to the SHMT family. As to quaternary structure, homodimer. Pyridoxal 5'-phosphate is required as a cofactor.

The protein resides in the cytoplasm. The catalysed reaction is (6R)-5,10-methylene-5,6,7,8-tetrahydrofolate + glycine + H2O = (6S)-5,6,7,8-tetrahydrofolate + L-serine. Its pathway is one-carbon metabolism; tetrahydrofolate interconversion. It functions in the pathway amino-acid biosynthesis; glycine biosynthesis; glycine from L-serine: step 1/1. In terms of biological role, catalyzes the reversible interconversion of serine and glycine with tetrahydrofolate (THF) serving as the one-carbon carrier. This reaction serves as the major source of one-carbon groups required for the biosynthesis of purines, thymidylate, methionine, and other important biomolecules. Also exhibits THF-independent aldolase activity toward beta-hydroxyamino acids, producing glycine and aldehydes, via a retro-aldol mechanism. This chain is Serine hydroxymethyltransferase, found in Chlamydia pneumoniae (Chlamydophila pneumoniae).